A 95-amino-acid chain; its full sequence is Small ribosomal subunit protein bS18 (95 aa).

It belongs to the bacterial ribosomal protein bS18 family. In terms of assembly, part of the 30S ribosomal subunit. Forms a tight heterodimer with protein bS6.

Binds as a heterodimer with protein bS6 to the central domain of the 16S rRNA, where it helps stabilize the platform of the 30S subunit. This chain is Small ribosomal subunit protein bS18, found in Rickettsia rickettsii (strain Sheila Smith).